The following is a 343-amino-acid chain: Ferredoxin--NADP reductase (343 aa).

The FAD site is built by D36, Q44, Y49, V89, F124, D289, and T330.

This sequence belongs to the ferredoxin--NADP reductase type 2 family. As to quaternary structure, homodimer. Requires FAD as cofactor.

It catalyses the reaction 2 reduced [2Fe-2S]-[ferredoxin] + NADP(+) + H(+) = 2 oxidized [2Fe-2S]-[ferredoxin] + NADPH. This is Ferredoxin--NADP reductase from Mesorhizobium japonicum (strain LMG 29417 / CECT 9101 / MAFF 303099) (Mesorhizobium loti (strain MAFF 303099)).